The primary structure comprises 463 residues: Bifunctional protein GlmU (463 aa).

The segment at 1-233 (MSKKSTFIIL…NFEVMGINSR (233 aa)) is pyrophosphorylase. UDP-N-acetyl-alpha-D-glucosamine contacts are provided by residues 10–13 (LAAG), Lys24, Gln76, 81–82 (GT), 104–106 (YGD), Gly143, Glu158, Asn173, and Asn231. Asp106 serves as a coordination point for Mg(2+). Asn231 lines the Mg(2+) pocket. Residues 234-254 (YELFVAEQELKLRINKEHLSK) form a linker region. The N-acetyltransferase stretch occupies residues 255–463 (GVQIIDIYST…LRRKQMYENR (209 aa)). The UDP-N-acetyl-alpha-D-glucosamine site is built by Arg336 and Lys354. His366 (proton acceptor) is an active-site residue. Tyr369 and Asn380 together coordinate UDP-N-acetyl-alpha-D-glucosamine. Residues 389-390 (NY), Ala426, and Arg443 each bind acetyl-CoA.

The protein in the N-terminal section; belongs to the N-acetylglucosamine-1-phosphate uridyltransferase family. It in the C-terminal section; belongs to the transferase hexapeptide repeat family. Homotrimer. It depends on Mg(2+) as a cofactor.

It is found in the cytoplasm. The enzyme catalyses alpha-D-glucosamine 1-phosphate + acetyl-CoA = N-acetyl-alpha-D-glucosamine 1-phosphate + CoA + H(+). It carries out the reaction N-acetyl-alpha-D-glucosamine 1-phosphate + UTP + H(+) = UDP-N-acetyl-alpha-D-glucosamine + diphosphate. It functions in the pathway nucleotide-sugar biosynthesis; UDP-N-acetyl-alpha-D-glucosamine biosynthesis; N-acetyl-alpha-D-glucosamine 1-phosphate from alpha-D-glucosamine 6-phosphate (route II): step 2/2. It participates in nucleotide-sugar biosynthesis; UDP-N-acetyl-alpha-D-glucosamine biosynthesis; UDP-N-acetyl-alpha-D-glucosamine from N-acetyl-alpha-D-glucosamine 1-phosphate: step 1/1. Its pathway is bacterial outer membrane biogenesis; LPS lipid A biosynthesis. In terms of biological role, catalyzes the last two sequential reactions in the de novo biosynthetic pathway for UDP-N-acetylglucosamine (UDP-GlcNAc). The C-terminal domain catalyzes the transfer of acetyl group from acetyl coenzyme A to glucosamine-1-phosphate (GlcN-1-P) to produce N-acetylglucosamine-1-phosphate (GlcNAc-1-P), which is converted into UDP-GlcNAc by the transfer of uridine 5-monophosphate (from uridine 5-triphosphate), a reaction catalyzed by the N-terminal domain. The sequence is that of Bifunctional protein GlmU from Caldicellulosiruptor saccharolyticus (strain ATCC 43494 / DSM 8903 / Tp8T 6331).